The chain runs to 61 residues: Large ribosomal subunit protein bL28 (61 aa).

Residues 1–26 are disordered; that stretch reads MAKDFLNGKRTHFGNKRSHALNSSRR. Positions 9–19 are enriched in basic residues; it reads KRTHFGNKRSH.

It belongs to the bacterial ribosomal protein bL28 family.

This Levilactobacillus brevis (strain ATCC 367 / BCRC 12310 / CIP 105137 / JCM 1170 / LMG 11437 / NCIMB 947 / NCTC 947) (Lactobacillus brevis) protein is Large ribosomal subunit protein bL28.